The chain runs to 384 residues: 1-deoxy-D-xylulose 5-phosphate reductoisomerase (384 aa).

Positions 10, 11, 12, 13, 36, 38, and 122 each coordinate NADPH. A 1-deoxy-D-xylulose 5-phosphate-binding site is contributed by Lys123. Glu124 is an NADPH binding site. A Mn(2+)-binding site is contributed by Asp148. Ser149, Glu150, Ser174, and His197 together coordinate 1-deoxy-D-xylulose 5-phosphate. Glu150 lines the Mn(2+) pocket. Gly203 provides a ligand contact to NADPH. 4 residues coordinate 1-deoxy-D-xylulose 5-phosphate: Ser210, Asn215, Lys216, and Glu219. Glu219 lines the Mn(2+) pocket.

It belongs to the DXR family. Mg(2+) is required as a cofactor. The cofactor is Mn(2+).

It carries out the reaction 2-C-methyl-D-erythritol 4-phosphate + NADP(+) = 1-deoxy-D-xylulose 5-phosphate + NADPH + H(+). It functions in the pathway isoprenoid biosynthesis; isopentenyl diphosphate biosynthesis via DXP pathway; isopentenyl diphosphate from 1-deoxy-D-xylulose 5-phosphate: step 1/6. Functionally, catalyzes the NADPH-dependent rearrangement and reduction of 1-deoxy-D-xylulose-5-phosphate (DXP) to 2-C-methyl-D-erythritol 4-phosphate (MEP). The sequence is that of 1-deoxy-D-xylulose 5-phosphate reductoisomerase from Geobacter metallireducens (strain ATCC 53774 / DSM 7210 / GS-15).